A 109-amino-acid polypeptide reads, in one-letter code: Class I hydrophobin G (109 aa).

The first 19 residues, 1 to 19, serve as a signal peptide directing secretion; that stretch reads MRLSILSVFSLVGAGMVSA. 4 disulfides stabilise this stretch: Cys-36-Cys-90, Cys-42-Cys-84, Cys-43-Cys-76, and Cys-91-Cys-105.

It belongs to the fungal hydrophobin family.

It localises to the secreted. The protein localises to the cell wall. Its function is as follows. Aerial growth, conidiation, and dispersal of filamentous fungi in the environment rely upon a capability of their secreting small amphipathic proteins called hydrophobins (HPBs) with low sequence identity. Class I can self-assemble into an outermost layer of rodlet bundles on aerial cell surfaces, conferring cellular hydrophobicity that supports fungal growth, development and dispersal; whereas Class II form highly ordered films at water-air interfaces through intermolecular interactions but contribute nothing to the rodlet structure. In P.expansum, hydrophobins contribute to germination, tolerance to cold stress and mycotoxins patulin and citrinin production. The chain is Class I hydrophobin G from Penicillium expansum (Blue mold rot fungus).